The following is a 296-amino-acid chain: 33 kDa chaperonin (296 aa).

Intrachain disulfides connect Cys238/Cys240 and Cys271/Cys274.

This sequence belongs to the HSP33 family. Under oxidizing conditions two disulfide bonds are formed involving the reactive cysteines. Under reducing conditions zinc is bound to the reactive cysteines and the protein is inactive.

It is found in the cytoplasm. In terms of biological role, redox regulated molecular chaperone. Protects both thermally unfolding and oxidatively damaged proteins from irreversible aggregation. Plays an important role in the bacterial defense system toward oxidative stress. This chain is 33 kDa chaperonin, found in Clostridium botulinum (strain Loch Maree / Type A3).